Here is a 597-residue protein sequence, read N- to C-terminus: MSAKPTLSKPIGSGEASSPAVVFRRLWPYIKPLIWVLIGAIVAMAVSAATDAAIPALLKPLLDKGFGAHANDRAKWFVPAAVIGLALIRSLSQYASGYLLAYVTNKILLDLRLKMFDRMIHTSVAFFQRETASTVINAIVFEVNQILNVLLSVLVTLVRDSLTVVFLLGYLFYLNWRLTLIVAVLLPAIGWLVGKINRRLRRLNREHQLLTNELSYIVEESVGGYKVVKVHNGEQYEMDRFESMSKRLRGYAMRMTVSGGLAQPLTQFLASIALAVVITIAVVQSSSDQTTVGGFVAFVTSMLLIISPLKHLMDVNQPLQRGMTACEMIFGLIDEPSEPEGGGKPLERAHGAVEFRDVSFVYSGNATHNRHTLDQISFRVAPGEMIALAGPSGSGKTTLVNLLPRFFDPTGGQILVDGVAIPEYDLHALRSQIAMVSQDVVLFNDTVANNVAYGQTADAGKVKAALRAANLWDTVEAMPKGIETLVGDNGMMLSGGQRQRLAIARAIYKDAPILILDEATSALDSESERHVQAALETLMKGRTTLVIAHRLSTIERADRILVMEAGRIVESGSHRELLAQDGLYAHLHRIQFQQSAA.

Helical transmembrane passes span 26 to 46 (LWPY…AMAV), 76 to 96 (WFVP…QYAS), 138 to 158 (AIVF…VTLV), 164 to 184 (VVFL…IVAV), 263 to 283 (QPLT…IAVV), and 292 to 312 (VGGF…LKHL). Positions 38–321 (IGAIVAMAVS…LMDVNQPLQR (284 aa)) constitute an ABC transmembrane type-1 domain. The ABC transporter domain maps to 353 to 590 (VEFRDVSFVY…DGLYAHLHRI (238 aa)). ATP is bound at residue 390–397 (GPSGSGKT).

Belongs to the ABC transporter superfamily. Lipid exporter (TC 3.A.1.106) family. As to quaternary structure, homodimer.

The protein resides in the cell inner membrane. The enzyme catalyses ATP + H2O + lipid A-core oligosaccharideSide 1 = ADP + phosphate + lipid A-core oligosaccharideSide 2.. Involved in lipopolysaccharide (LPS) biosynthesis. Translocates lipid A-core from the inner to the outer leaflet of the inner membrane. Transmembrane domains (TMD) form a pore in the inner membrane and the ATP-binding domain (NBD) is responsible for energy generation. This chain is ATP-dependent lipid A-core flippase, found in Paraburkholderia xenovorans (strain LB400).